The sequence spans 305 residues: UDP-3-O-acyl-N-acetylglucosamine deacetylase (305 aa).

Zn(2+) is bound by residues His79, His238, and Asp242. His265 serves as the catalytic Proton donor.

Belongs to the LpxC family. The cofactor is Zn(2+).

The catalysed reaction is a UDP-3-O-[(3R)-3-hydroxyacyl]-N-acetyl-alpha-D-glucosamine + H2O = a UDP-3-O-[(3R)-3-hydroxyacyl]-alpha-D-glucosamine + acetate. Its pathway is glycolipid biosynthesis; lipid IV(A) biosynthesis; lipid IV(A) from (3R)-3-hydroxytetradecanoyl-[acyl-carrier-protein] and UDP-N-acetyl-alpha-D-glucosamine: step 2/6. Catalyzes the hydrolysis of UDP-3-O-myristoyl-N-acetylglucosamine to form UDP-3-O-myristoylglucosamine and acetate, the committed step in lipid A biosynthesis. This Salmonella agona (strain SL483) protein is UDP-3-O-acyl-N-acetylglucosamine deacetylase.